The sequence spans 273 residues: Epidermal growth factor-like protein 7 (273 aa).

The signal sequence occupies residues 1 to 23 (MRGSQEVLLMWLLVLAVGGTEHA). Residues 27-104 (GRRVCAVRAH…TSGLPGACGA (78 aa)) enclose the EMI domain. Cystine bridges form between cysteine 31–cysteine 89, cysteine 56–cysteine 62, cysteine 88–cysteine 102, cysteine 107–cysteine 117, cysteine 111–cysteine 123, cysteine 125–cysteine 134, cysteine 141–cysteine 152, cysteine 148–cysteine 161, and cysteine 163–cysteine 176. The EGF-like 1 domain maps to 103-135 (GAAICQPPCRNGGSCVQPGRCRCPAGWRGDTCQ). The short motif at 130-132 (RGD) is the Cell attachment site element. Residues 137 to 177 (DVDECSARRGGCPQRCVNTAGSYWCQCWEGHSLSADGTLCV) form the EGF-like 2; calcium-binding domain. A coiled-coil region spans residues 192–219 (VDSAMKEEVQRLQSRVDLLEEKLQLVLA).

Interacts with ITGAV/ITGB3 in an RGD-dependent manner, increasing endothelial cell's motility.

It is found in the secreted. The protein resides in the extracellular space. Its function is as follows. Regulates vascular tubulogenesis in vivo. Inhibits platelet-derived growth factor (PDGF)-BB-induced smooth muscle cell migration and promotes endothelial cell adhesion to the extracellular matrix and angiogenesis. The chain is Epidermal growth factor-like protein 7 (EGFL7) from Homo sapiens (Human).